The following is a 74-amino-acid chain: Anionic peptide clone 8 (74 aa).

An N-terminal signal peptide occupies residues 1 to 24; that stretch reads MVSKSLIVLLLVSVLVSTFFTTEA.

It belongs to the non-disulfide-bridged peptide (NDBP) superfamily. Long chain multifunctional peptide (group 2) family. In terms of tissue distribution, expressed by the venom gland.

The protein resides in the secreted. Functionally, may be an antimicrobial peptide. This chain is Anionic peptide clone 8, found in Tityus costatus (Brazilian scorpion).